The following is a 353-amino-acid chain: Anthranilate phosphoribosyltransferase (353 aa).

5-phospho-alpha-D-ribose 1-diphosphate contacts are provided by residues G86, 89-90 (GD), 96-99 (NVST), 114-122 (KHGNRAVSG), and S126. Residue G86 participates in anthranilate binding. S98 contacts Mg(2+). Residue N117 coordinates anthranilate. R172 is a binding site for anthranilate. 2 residues coordinate Mg(2+): D231 and E232.

The protein belongs to the anthranilate phosphoribosyltransferase family. As to quaternary structure, homodimer. It depends on Mg(2+) as a cofactor.

The enzyme catalyses N-(5-phospho-beta-D-ribosyl)anthranilate + diphosphate = 5-phospho-alpha-D-ribose 1-diphosphate + anthranilate. It participates in amino-acid biosynthesis; L-tryptophan biosynthesis; L-tryptophan from chorismate: step 2/5. Functionally, catalyzes the transfer of the phosphoribosyl group of 5-phosphorylribose-1-pyrophosphate (PRPP) to anthranilate to yield N-(5'-phosphoribosyl)-anthranilate (PRA). The polypeptide is Anthranilate phosphoribosyltransferase (Pseudomonas syringae pv. syringae (strain B728a)).